A 672-amino-acid polypeptide reads, in one-letter code: Acetoacetyl-CoA synthetase (672 aa).

Belongs to the ATP-dependent AMP-binding enzyme family. In terms of tissue distribution, abundant in male subcutaneous white adipose tissue after weaning. In white adipose tissue, it is preferentially detected in mature adipocytes but not in preadipocytes. The expression in primary preadipocytes increases during the adipocyte differentiation. In brain, it is expressed in the midbrain, pons/medulla, cerebral cortex, hippocampus and cerebellum. The expression in the cerebellum is restricted primarily to glial cells, while in the cerebral cortex, it is restricted to neuronal cells.

Its subcellular location is the cytoplasm. The protein resides in the cytosol. The catalysed reaction is acetoacetate + ATP + CoA = acetoacetyl-CoA + AMP + diphosphate. In terms of biological role, converts acetoacetate to acetoacetyl-CoA in the cytosol. Ketone body-utilizing enzyme, responsible for the synthesis of cholesterol and fatty acids. The protein is Acetoacetyl-CoA synthetase (Aacs) of Rattus norvegicus (Rat).